The chain runs to 650 residues: Chaperone protein DnaK (650 aa).

Phosphothreonine; by autocatalysis is present on threonine 200. Residues 613-634 (QAGAAGAAGAAAAEGAAQGGAQ) show a composition bias toward low complexity. The disordered stretch occupies residues 613–637 (QAGAAGAAGAAAAEGAAQGGAQTAD).

Belongs to the heat shock protein 70 family.

Its function is as follows. Acts as a chaperone. The protein is Chaperone protein DnaK of Burkholderia thailandensis (strain ATCC 700388 / DSM 13276 / CCUG 48851 / CIP 106301 / E264).